Reading from the N-terminus, the 422-residue chain is Cystine lyase CORI3 (422 aa).

The protein belongs to the class-I pyridoxal-phosphate-dependent aminotransferase family. As to quaternary structure, homodimer. It depends on pyridoxal 5'-phosphate as a cofactor. Expressed in cotyledons, sepals, pistils, flower buds, phloem companion cells and vascular tissues of petiole, leaf, filament and fruit.

The enzyme catalyses L-cystine + H2O = S-sulfanyl-L-cysteine + pyruvate + NH4(+). Functionally, possesses cystine lyase activity in vitro. Does not possess tyrosine aminotransferase, alanine aminotransferase, aspartate aminotransferase and tryptophan aminotransferase activities. The polypeptide is Cystine lyase CORI3 (Arabidopsis thaliana (Mouse-ear cress)).